Reading from the N-terminus, the 554-residue chain is Glutamine--tRNA ligase (554 aa).

The short motif at 34–44 is the 'HIGH' region element; the sequence is PEPNGYLHIGH. Residues 35-37 and 41-47 contribute to the ATP site; these read EPN and HIGHAKS. L-glutamine is bound by residues Asp67 and Tyr212. Residues Thr231, 261 to 262, and 269 to 271 contribute to the ATP site; these read RL and MSK. The 'KMSKS' region signature appears at 268–272; sequence VMSKR. Residues 317 to 324 are interaction with tRNA; that stretch reads TKQDNTIE.

The protein belongs to the class-I aminoacyl-tRNA synthetase family. Monomer.

It localises to the cytoplasm. The enzyme catalyses tRNA(Gln) + L-glutamine + ATP = L-glutaminyl-tRNA(Gln) + AMP + diphosphate. The sequence is that of Glutamine--tRNA ligase from Shigella boydii serotype 18 (strain CDC 3083-94 / BS512).